Reading from the N-terminus, the 103-residue chain is MLNIKKKDKVLILSGKDRGKKGEVIYVSPDKGKVIVTKINVVKRHTNPTRKDLGGIHKKEAPIAISKIMLICPKCSRGSRAKFDKLSDGKKIRVCRRCGEVIV.

The protein belongs to the universal ribosomal protein uL24 family. Part of the 50S ribosomal subunit.

Functionally, one of two assembly initiator proteins, it binds directly to the 5'-end of the 23S rRNA, where it nucleates assembly of the 50S subunit. In terms of biological role, one of the proteins that surrounds the polypeptide exit tunnel on the outside of the subunit. This Endomicrobium trichonymphae protein is Large ribosomal subunit protein uL24.